A 330-amino-acid chain; its full sequence is MEKALNFEQYVNLADPKLGAEAIFATDDFFADKSRLIRTEAAEWKEDLYDDNGKWMDGWESRRKRSEGYDFCVVRLGLAGTIAGLDIDTSFFTGNFPPSASVDACYSPDGEPSDSTEWQEILSSQSLQGDSHHLHALDNEQVFTHVRLNIYPDGGVARLRVYGRPSVNWDQIGIDQEVDLAAVVNGGRALACSDEHFGKKSNILGPGRGENMGDGWETARRRTPGNDWVIVALGRPGKIGKVVVDTAHFKGNFPDSCSIQAAYVQGGTDDQVETQSLFWRELMPSQKLSAHNIQEFVEQVNDLGAVTHVRLNIFPDGGISRLRLFGFKSE.

This sequence belongs to the allantoicase family.

It carries out the reaction allantoate + H2O = (S)-ureidoglycolate + urea. The protein operates within nitrogen metabolism; (S)-allantoin degradation; (S)-ureidoglycolate from allantoate (aminidohydrolase route): step 1/1. This Photobacterium profundum (strain SS9) protein is Probable allantoicase.